A 136-amino-acid polypeptide reads, in one-letter code: Sec-independent protein translocase protein TatB (136 aa).

A helical transmembrane segment spans residues 1 to 21 (MFDIGFWELVLISVIGLVVLG). Residues 66 to 136 (ASKQGLSDLD…TTPPRQDKNE (71 aa)) form a disordered region. Basic and acidic residues-rich tracts occupy residues 77-89 (ELQKSIDEMKETA) and 96-107 (YKKDIDDIKTSL). Residues 108-130 (DKNPSGTTQQENSILDSSKTTPP) are compositionally biased toward polar residues.

The protein belongs to the TatB family. The Tat system comprises two distinct complexes: a TatABC complex, containing multiple copies of TatA, TatB and TatC subunits, and a separate TatA complex, containing only TatA subunits. Substrates initially bind to the TatABC complex, which probably triggers association of the separate TatA complex to form the active translocon.

Its subcellular location is the cell inner membrane. Its function is as follows. Part of the twin-arginine translocation (Tat) system that transports large folded proteins containing a characteristic twin-arginine motif in their signal peptide across membranes. Together with TatC, TatB is part of a receptor directly interacting with Tat signal peptides. TatB may form an oligomeric binding site that transiently accommodates folded Tat precursor proteins before their translocation. This is Sec-independent protein translocase protein TatB from Psychromonas ingrahamii (strain DSM 17664 / CCUG 51855 / 37).